A 382-amino-acid polypeptide reads, in one-letter code: Lipid-A-disaccharide synthase (382 aa).

It belongs to the LpxB family.

It carries out the reaction 2-N,3-O-bis[(3R)-3-hydroxytetradecanoyl]-alpha-D-glucosaminyl 1-phosphate + UDP-2-N,3-O-bis[(3R)-3-hydroxytetradecanoyl]-alpha-D-glucosamine = lipid A disaccharide (E. coli) + UDP + H(+). It catalyses the reaction a lipid X + a UDP-2-N,3-O-bis[(3R)-3-hydroxyacyl]-alpha-D-glucosamine = a lipid A disaccharide + UDP + H(+). The protein operates within glycolipid biosynthesis; lipid IV(A) biosynthesis; lipid IV(A) from (3R)-3-hydroxytetradecanoyl-[acyl-carrier-protein] and UDP-N-acetyl-alpha-D-glucosamine: step 5/6. Condensation of UDP-2,3-diacylglucosamine and 2,3-diacylglucosamine-1-phosphate to form lipid A disaccharide, a precursor of lipid A, a phosphorylated glycolipid that anchors the lipopolysaccharide to the outer membrane of the cell. The protein is Lipid-A-disaccharide synthase of Escherichia coli (strain ATCC 8739 / DSM 1576 / NBRC 3972 / NCIMB 8545 / WDCM 00012 / Crooks).